Here is a 245-residue protein sequence, read N- to C-terminus: Probable transcriptional regulatory protein LVIS_1199 (245 aa).

The tract at residues 1-23 (MSGHSKWHNIQGRKNAQDAKRGK) is disordered.

This sequence belongs to the TACO1 family.

It localises to the cytoplasm. The sequence is that of Probable transcriptional regulatory protein LVIS_1199 from Levilactobacillus brevis (strain ATCC 367 / BCRC 12310 / CIP 105137 / JCM 1170 / LMG 11437 / NCIMB 947 / NCTC 947) (Lactobacillus brevis).